The primary structure comprises 123 residues: Small ribosomal subunit protein uS12 (123 aa).

Aspartate 89 bears the 3-methylthioaspartic acid mark.

It belongs to the universal ribosomal protein uS12 family. In terms of assembly, part of the 30S ribosomal subunit. Contacts proteins S8 and S17. May interact with IF1 in the 30S initiation complex.

With S4 and S5 plays an important role in translational accuracy. In terms of biological role, interacts with and stabilizes bases of the 16S rRNA that are involved in tRNA selection in the A site and with the mRNA backbone. Located at the interface of the 30S and 50S subunits, it traverses the body of the 30S subunit contacting proteins on the other side and probably holding the rRNA structure together. The combined cluster of proteins S8, S12 and S17 appears to hold together the shoulder and platform of the 30S subunit. This chain is Small ribosomal subunit protein uS12, found in Bartonella tribocorum (strain CIP 105476 / IBS 506).